Consider the following 1553-residue polypeptide: Probable serine/threonine-protein kinase qkgA (1553 aa).

The interval 113–142 (SSSSSSSSTSSSPSLTSSPSSPISTSPPYH) is disordered. LRR repeat units follow at residues 287-309 (NGTFLLLSKSNITRFPMSIINMC), 311-333 (QLVELDMSNNRITEIPIEITELK), 334-356 (FLKNLNLSDNLINDIPLEICNLT), and 357-378 (LLKVLLLNENPLNNFPSSIVEL). The Roc domain maps to 395-619 (SCETWNKVKL…KRLIHESEKS (225 aa)). Disordered regions lie at residues 643–696 (NQGR…QQQQ), 955–1019 (ISNS…PSSQ), and 1048–1090 (NQNG…NNNK). 4 stretches are compositionally biased toward low complexity: residues 648–675 (SISNSASNSSSSLLNSSSSSSPSLTSKK), 683–696 (SQQQQQQHQQQQQQ), 956–1018 (SNST…SPSS), and 1059–1090 (TTTTTSTSTSTTSTTTPTTTTPTIPIKNNNNK). The COR domain occupies 694-893 (QQQLQQSIKE…KTYWKDGVLL (200 aa)). The region spanning 1242–1546 (ILYERQIGEG…QTSYFDSPFL (305 aa)) is the Protein kinase domain. ATP is bound by residues 1248-1256 (IGEGGFGLI) and K1271. The Proton acceptor role is filled by D1393.

Belongs to the protein kinase superfamily. TKL Ser/Thr protein kinase family. ROCO subfamily.

It catalyses the reaction L-seryl-[protein] + ATP = O-phospho-L-seryl-[protein] + ADP + H(+). The enzyme catalyses L-threonyl-[protein] + ATP = O-phospho-L-threonyl-[protein] + ADP + H(+). Involved in growth, and during development, in aggregation. The chain is Probable serine/threonine-protein kinase qkgA (qkgA-1) from Dictyostelium discoideum (Social amoeba).